The following is a 462-amino-acid chain: Argininosuccinate lyase (462 aa).

It belongs to the lyase 1 family. Argininosuccinate lyase subfamily.

It is found in the cytoplasm. It catalyses the reaction 2-(N(omega)-L-arginino)succinate = fumarate + L-arginine. Its pathway is amino-acid biosynthesis; L-arginine biosynthesis; L-arginine from L-ornithine and carbamoyl phosphate: step 3/3. This Rippkaea orientalis (strain PCC 8801 / RF-1) (Cyanothece sp. (strain PCC 8801)) protein is Argininosuccinate lyase.